A 155-amino-acid polypeptide reads, in one-letter code: Interleukin-2 (155 aa).

An N-terminal signal peptide occupies residues 1-20; that stretch reads MYKIQLLSCIALTLALVANG. Residue threonine 23 is glycosylated (O-linked (GalNAc...) threonine). The cysteines at positions 79 and 127 are disulfide-linked.

The protein belongs to the IL-2 family.

It is found in the secreted. Functionally, cytokine produced by activated CD4-positive helper T-cells and to a lesser extend activated CD8-positive T-cells and natural killer (NK) cells that plays pivotal roles in the immune response and tolerance. Binds to a receptor complex composed of either the high-affinity trimeric IL-2R (IL2RA/CD25, IL2RB/CD122 and IL2RG/CD132) or the low-affinity dimeric IL-2R (IL2RB and IL2RG). Interaction with the receptor leads to oligomerization and conformation changes in the IL-2R subunits resulting in downstream signaling starting with phosphorylation of JAK1 and JAK3. In turn, JAK1 and JAK3 phosphorylate the receptor to form a docking site leading to the phosphorylation of several substrates including STAT5. This process leads to activation of several pathways including STAT, phosphoinositide-3-kinase/PI3K and mitogen-activated protein kinase/MAPK pathways. Functions as a T-cell growth factor and can increase NK-cell cytolytic activity as well. Promotes strong proliferation of activated B-cells and subsequently immunoglobulin production. Plays a pivotal role in regulating the adaptive immune system by controlling the survival and proliferation of regulatory T-cells, which are required for the maintenance of immune tolerance. Moreover, participates in the differentiation and homeostasis of effector T-cell subsets, including Th1, Th2, Th17 as well as memory CD8-positive T-cells. The chain is Interleukin-2 (IL2) from Boselaphus tragocamelus (Nilgai).